Reading from the N-terminus, the 538-residue chain is Phosphoenolpyruvate carboxykinase (ATP) (538 aa).

Arg-64, Tyr-205, and Lys-211 together coordinate substrate. ATP is bound by residues Lys-211, His-230, and 246-254; that span reads GLSGTGKTT. Residues Lys-211 and His-230 each coordinate Mn(2+). Residue Asp-267 participates in Mn(2+) binding. ATP-binding positions include Glu-295, Arg-331, 447-448, and Thr-453; that span reads RI. Arg-331 contacts substrate.

Belongs to the phosphoenolpyruvate carboxykinase (ATP) family. As to quaternary structure, monomer. Mn(2+) serves as cofactor.

It is found in the cytoplasm. It catalyses the reaction oxaloacetate + ATP = phosphoenolpyruvate + ADP + CO2. Its pathway is carbohydrate biosynthesis; gluconeogenesis. Its function is as follows. Involved in the gluconeogenesis. Catalyzes the conversion of oxaloacetate (OAA) to phosphoenolpyruvate (PEP) through direct phosphoryl transfer between the nucleoside triphosphate and OAA. The polypeptide is Phosphoenolpyruvate carboxykinase (ATP) (Histophilus somni (strain 129Pt) (Haemophilus somnus)).